Reading from the N-terminus, the 149-residue chain is Ribonuclease pancreatic (149 aa).

A signal peptide spans Met1–Gly25. Residues Lys32 and Arg35 each contribute to the substrate site. Residue His37 is the Proton acceptor of the active site. Intrachain disulfides connect Cys51–Cys109, Cys65–Cys120, Cys83–Cys135, and Cys90–Cys97. Lys66–Thr70 serves as a coordination point for substrate. A glycan (N-linked (GlcNAc...) asparagine) is linked at Asn87. Residues Lys91 and Arg110 each contribute to the substrate site. The Proton donor role is filled by His144.

Belongs to the pancreatic ribonuclease family. In terms of assembly, monomer. Interacts with and forms tight 1:1 complexes with RNH1. Dimerization of two such complexes may occur. Interaction with RNH1 inhibits this protein. In terms of tissue distribution, pancreas.

It localises to the secreted. The enzyme catalyses an [RNA] containing cytidine + H2O = an [RNA]-3'-cytidine-3'-phosphate + a 5'-hydroxy-ribonucleotide-3'-[RNA].. The catalysed reaction is an [RNA] containing uridine + H2O = an [RNA]-3'-uridine-3'-phosphate + a 5'-hydroxy-ribonucleotide-3'-[RNA].. Functionally, endonuclease that catalyzes the cleavage of RNA on the 3' side of pyrimidine nucleotides. Acts on single-stranded and double-stranded RNA. The sequence is that of Ribonuclease pancreatic (RNASE1) from Acomys cahirinus (Cairo spiny mouse).